The sequence spans 212 residues: Adenylate kinase (212 aa).

14–19 lines the ATP pocket; sequence GSGKGT. An NMP region spans residues 34 to 63; that stretch reads STGDLFRKKISEDSRFAAQIQNYLSSGSYV. AMP-binding positions include Thr-35, Arg-40, 61 to 63, 89 to 92, and Gln-96; these read SYV and GYPR. The tract at residues 126 to 163 is LID; that stretch reads QRLFCQKCQKSYNLLLAKPKNGLKCDLDNTDLITRNDD. An ATP-binding site is contributed by Arg-127. Cys-130 and Cys-133 together coordinate Zn(2+). Residue 136–137 participates in ATP binding; it reads SY. Positions 150 and 153 each coordinate Zn(2+). AMP-binding residues include Arg-160 and Arg-171. Gln-199 contributes to the ATP binding site.

The protein belongs to the adenylate kinase family. In terms of assembly, monomer.

It is found in the cytoplasm. It catalyses the reaction AMP + ATP = 2 ADP. It participates in purine metabolism; AMP biosynthesis via salvage pathway; AMP from ADP: step 1/1. In terms of biological role, catalyzes the reversible transfer of the terminal phosphate group between ATP and AMP. Plays an important role in cellular energy homeostasis and in adenine nucleotide metabolism. The protein is Adenylate kinase of Mesomycoplasma hyopneumoniae (strain 232) (Mycoplasma hyopneumoniae).